The sequence spans 274 residues: Formamidopyrimidine-DNA glycosylase (274 aa).

Proline 2 (schiff-base intermediate with DNA) is an active-site residue. Glutamate 3 serves as the catalytic Proton donor. Residue lysine 58 is the Proton donor; for beta-elimination activity of the active site. Positions 91, 110, and 152 each coordinate DNA. An FPG-type zinc finger spans residues 237–271 (KVYGRKNLPCLVCENKIETVVIAGRHSAFCPHCQP). Residue arginine 261 is the Proton donor; for delta-elimination activity of the active site.

It belongs to the FPG family. Monomer. Zn(2+) is required as a cofactor.

The enzyme catalyses Hydrolysis of DNA containing ring-opened 7-methylguanine residues, releasing 2,6-diamino-4-hydroxy-5-(N-methyl)formamidopyrimidine.. It catalyses the reaction 2'-deoxyribonucleotide-(2'-deoxyribose 5'-phosphate)-2'-deoxyribonucleotide-DNA = a 3'-end 2'-deoxyribonucleotide-(2,3-dehydro-2,3-deoxyribose 5'-phosphate)-DNA + a 5'-end 5'-phospho-2'-deoxyribonucleoside-DNA + H(+). Functionally, involved in base excision repair of DNA damaged by oxidation or by mutagenic agents. Acts as a DNA glycosylase that recognizes and removes damaged bases. Has a preference for oxidized purines, such as 7,8-dihydro-8-oxoguanine (8-oxoG). Has AP (apurinic/apyrimidinic) lyase activity and introduces nicks in the DNA strand. Cleaves the DNA backbone by beta-delta elimination to generate a single-strand break at the site of the removed base with both 3'- and 5'-phosphates. The sequence is that of Formamidopyrimidine-DNA glycosylase from Legionella pneumophila subsp. pneumophila (strain Philadelphia 1 / ATCC 33152 / DSM 7513).